The sequence spans 226 residues: PKHD-type hydroxylase PputW619_4316 (226 aa).

The 101-residue stretch at 78–178 folds into the Fe2OG dioxygenase domain; the sequence is KVFPPLINCY…RYAAFFWTQS (101 aa). Positions 96, 98, and 159 each coordinate Fe cation. Position 169 (Arg-169) interacts with 2-oxoglutarate.

The cofactor is Fe(2+). L-ascorbate serves as cofactor.

The polypeptide is PKHD-type hydroxylase PputW619_4316 (Pseudomonas putida (strain W619)).